Here is a 299-residue protein sequence, read N- to C-terminus: tRNA pseudouridine synthase B (299 aa).

Asp49 functions as the Nucleophile in the catalytic mechanism. The PUA domain maps to 241 to 299 (MPRVTVSGRAAARVLHGVAPAVRVEHPDGTTVAVVAANGALLALAEADGGGLRLRKVFG).

It belongs to the pseudouridine synthase TruB family. Type 1 subfamily.

The catalysed reaction is uridine(55) in tRNA = pseudouridine(55) in tRNA. Responsible for synthesis of pseudouridine from uracil-55 in the psi GC loop of transfer RNAs. In Symbiobacterium thermophilum (strain DSM 24528 / JCM 14929 / IAM 14863 / T), this protein is tRNA pseudouridine synthase B.